A 57-amino-acid chain; its full sequence is UPF0509 protein YciZ (57 aa).

It belongs to the UPF0509 family.

The sequence is that of UPF0509 protein YciZ from Escherichia coli O127:H6 (strain E2348/69 / EPEC).